Consider the following 37-residue polypeptide: Photosystem I reaction center subunit IX (37 aa).

Residues F4 to I24 form a helical membrane-spanning segment.

Belongs to the PsaJ family.

Its subcellular location is the cellular thylakoid membrane. In terms of biological role, may help in the organization of the PsaE and PsaF subunits. The protein is Photosystem I reaction center subunit IX of Synechococcus sp. (strain WH7803).